Consider the following 90-residue polypeptide: Probable Fe(2+)-trafficking protein (90 aa).

This sequence belongs to the Fe(2+)-trafficking protein family.

In terms of biological role, could be a mediator in iron transactions between iron acquisition and iron-requiring processes, such as synthesis and/or repair of Fe-S clusters in biosynthetic enzymes. This Pseudomonas entomophila (strain L48) protein is Probable Fe(2+)-trafficking protein.